A 676-amino-acid polypeptide reads, in one-letter code: SPARC-like protein 1 (676 aa).

The N-terminal stretch at 1–16 (MKTVLLLICLLGSAFT) is a signal peptide. The span at 35–44 (EKHKYTHSEM) shows a compositional bias: basic and acidic residues. 3 disordered regions span residues 35-151 (EKHK…WALR), 173-369 (NTVG…GVYR), and 385-437 (SEDN…RNST). Residues 95-108 (KNSLRSINFLTLHS) are compositionally biased toward polar residues. An N-linked (GlcNAc...) asparagine glycan is attached at asparagine 182. Acidic residues predominate over residues 184–202 (SEEEEAGEEEDEEWGEETD). Composition is skewed to basic and acidic residues over residues 249 to 266 (EKFSMEEESQEKLYKEGK) and 273 to 291 (NHNEDQGEKRQSEESKEHF). Acidic residues predominate over residues 312-328 (NAEEDDNDSGDDGEEDL). N-linked (GlcNAc...) asparagine glycosylation occurs at asparagine 318. Residues 385-394 (SEDNHYHHEP) are compositionally biased toward basic and acidic residues. A glycan (N-linked (GlcNAc...) asparagine) is linked at asparagine 396. Residues 397–408 (SSSKQQLQTSSS) show a composition bias toward low complexity. A glycan (N-linked (GlcNAc...) asparagine) is linked at asparagine 413. Basic and acidic residues predominate over residues 415–433 (TEHEDEVKTTGGSYHEESA). Asparagine 435 is a glycosylation site (N-linked (GlcNAc...) asparagine). The 23-residue stretch at 444–466 (LCRNFHCKRGKVCQADKQGKPSC) folds into the Follistatin-like domain. Intrachain disulfides connect cysteine 445/cysteine 456, cysteine 450/cysteine 466, cysteine 468/cysteine 502, cysteine 474/cysteine 495, cysteine 484/cysteine 521, cysteine 527/cysteine 638, and cysteine 646/cysteine 662. The region spanning 462-523 (GKPSCICQDP…HLDYMGACKH (62 aa)) is the Kazal-like domain. Asparagine 488 carries N-linked (GlcNAc...) asparagine glycosylation. Residues 634–669 (PMEHCITRFFQECDGDQDKLITLKEWCHCFAIKEED) enclose the EF-hand domain. Residues aspartate 647, aspartate 649, aspartate 651, and glutamate 658 each coordinate Ca(2+).

This sequence belongs to the SPARC family. Glial (Mueller) cells of the neuroretina.

The protein resides in the secreted. It is found in the extracellular space. Its subcellular location is the extracellular matrix. Its function is as follows. Could play a role in the late stage of neuroretina morphogenesis. In Coturnix japonica (Japanese quail), this protein is SPARC-like protein 1 (SPARCL1).